Consider the following 293-residue polypeptide: ATP synthase gamma chain (293 aa).

This sequence belongs to the ATPase gamma chain family. In terms of assembly, F-type ATPases have 2 components, CF(1) - the catalytic core - and CF(0) - the membrane proton channel. CF(1) has five subunits: alpha(3), beta(3), gamma(1), delta(1), epsilon(1). CF(0) has three main subunits: a, b and c.

It localises to the cell inner membrane. In terms of biological role, produces ATP from ADP in the presence of a proton gradient across the membrane. The gamma chain is believed to be important in regulating ATPase activity and the flow of protons through the CF(0) complex. The polypeptide is ATP synthase gamma chain (Beijerinckia indica subsp. indica (strain ATCC 9039 / DSM 1715 / NCIMB 8712)).